A 279-amino-acid chain; its full sequence is Dehydrogenase/reductase SDR family member 4 (279 aa).

Residue 37–61 coordinates NADP(+); it reads LVTASTDGIGLAIARRLAQDGAHVV. K93 bears the N6-acetyllysine; alternate mark. K93 is modified (N6-succinyllysine; alternate). Residue S170 participates in substrate binding. The active-site Proton acceptor is Y183. NADP(+) is bound at residue K187. Residue K217 is modified to N6-acetyllysine; alternate. Residue K217 is modified to N6-succinyllysine; alternate. Position 221 is a phosphoserine (S221). K228 and K235 each carry N6-succinyllysine. Residues 277–279 carry the Peroxisomal targeting signal motif; it reads SRL.

It belongs to the short-chain dehydrogenases/reductases (SDR) family. In terms of assembly, homotetramer. As to expression, detected in heart, kidney, liver and small intestine. Detected at lower levels in brain, lung, stomach and spleen.

It is found in the peroxisome. It catalyses the reaction a secondary alcohol + NADP(+) = a ketone + NADPH + H(+). It carries out the reaction 3alpha-hydroxy-5beta-pregnan-20-one + NADP(+) = 5beta-pregnan-3,20-dione + NADPH + H(+). The catalysed reaction is 5beta-dihydrotestosterone + NADPH + H(+) = 5beta-androstane-3alpha,17beta-diol + NADP(+). The enzyme catalyses all-trans-retinol + NADP(+) = all-trans-retinal + NADPH + H(+). It catalyses the reaction isatin + NADPH + H(+) = 3-hydroxyindolin-2-one + NADP(+). Inhibited by kaempferol, quercetin, genistein and myristic acid. NADPH-dependent oxidoreductase which catalyzes the reduction of a variety of compounds bearing carbonyl groups including ketosteroids, alpha-dicarbonyl compounds, aldehydes, aromatic ketones and quinones. Reduces all-trans-retinal and 9-cis retinal. Reduces 3-ketosteroids and benzil into 3alpha-hydroxysteroids and S-benzoin, respectively, in contrast to the stereoselectivity of primates DHRS4s which produce 3beta-hydroxysteroids and R-benzoin. In the reverse reaction, catalyzes the NADP-dependent oxidation of 3alpha-hydroxysteroids and alcohol, but with much lower efficiency. Involved in the metabolism of 3alpha-hydroxysteroids, retinoid, isatin and xenobiotic carbonyl compounds. In Sus scrofa (Pig), this protein is Dehydrogenase/reductase SDR family member 4 (DHRS4).